A 701-amino-acid polypeptide reads, in one-letter code: Protein SOSEKI 1 (701 aa).

The interval 8 to 101 (LSAQVLYQLS…YVLRASELID (94 aa)) is DIX-like oligomerization domain. Disordered stretches follow at residues 238–262 (STVHGVHTPPSPSLKSSTELPFSPG), 300–329 (LPPNTHSTHEDNSFWRDSRSKSPSPSSLNE), 366–389 (PYNTCEGASTKIPESKHNSPYRTK), and 538–575 (IASSKPLPPGFHKGTNDTKPVQITPRRTPRNSIPLASP). Basic and acidic residues predominate over residues 306 to 319 (STHEDNSFWRDSRS). Residues 658–687 (ILQECSICRRTFKPDSLQVHMRGCHPPQYA) form a C2HC/C3H-type zinc finger. Zn(2+) is bound by residues cysteine 662, cysteine 665, histidine 677, and cysteine 681.

The protein belongs to the SOSEKI family. As to quaternary structure, homodimer. Forms long polymer filaments with other SOKs proteins polymers crucial for polar localization and biological activity. Requires Zn(2+) as cofactor.

Its subcellular location is the cell membrane. Functionally, SOSEKI proteins locally interpret global polarity cues and can influence cell division orientation to coordinate cell polarization relative to body axes. The polypeptide is Protein SOSEKI 1 (Physcomitrium patens (Spreading-leaved earth moss)).